A 373-amino-acid chain; its full sequence is Histidinol-phosphate aminotransferase (373 aa).

K233 carries the post-translational modification N6-(pyridoxal phosphate)lysine.

It belongs to the class-II pyridoxal-phosphate-dependent aminotransferase family. Histidinol-phosphate aminotransferase subfamily. In terms of assembly, homodimer. Requires pyridoxal 5'-phosphate as cofactor.

It catalyses the reaction L-histidinol phosphate + 2-oxoglutarate = 3-(imidazol-4-yl)-2-oxopropyl phosphate + L-glutamate. It functions in the pathway amino-acid biosynthesis; L-histidine biosynthesis; L-histidine from 5-phospho-alpha-D-ribose 1-diphosphate: step 7/9. The polypeptide is Histidinol-phosphate aminotransferase (Nitratidesulfovibrio vulgaris (strain DP4) (Desulfovibrio vulgaris)).